The chain runs to 333 residues: Large ribosomal subunit protein uL3 (333 aa).

2 stretches are compositionally biased toward basic residues: residues 1-10 and 17-26; these read MGMKRNRPRR and PRKRAKRPVP. Positions 1 to 29 are disordered; that stretch reads MGMKRNRPRRGSLAFSPRKRAKRPVPKIR.

The protein belongs to the universal ribosomal protein uL3 family. In terms of assembly, part of the 50S ribosomal subunit. Forms a cluster with proteins L14 and L24e.

Functionally, one of the primary rRNA binding proteins, it binds directly near the 3'-end of the 23S rRNA, where it nucleates assembly of the 50S subunit. This Methanococcus aeolicus (strain ATCC BAA-1280 / DSM 17508 / OCM 812 / Nankai-3) protein is Large ribosomal subunit protein uL3.